The chain runs to 418 residues: MFRRLLIATVVGILAAFAVAGFRHAMLLLEWLFLNNDSGSLVNAATNLSPWRRLLTPALGGLAAGLLLMGWQKFTQQRPHAPTDYMEALQTDGQFDYAASLVKSLASLLVVTSGSAIGREGAMILLAALAASCFAQRFTPRQEWKLWIACGAAAGMAAAYRAPLAGSLFIAEVLFGTMMLASLGPVIISAVVALLVSNLINHSDALLYSVQLSVTVQARDYALIISTGVLAGLCGPLLLTLMNACHREFVSLKLAPPWQLALGGLIVGLLSLFTPAVWGNGYSTVQSFLTAPPLLMIIAGIFLCKLFAVLASSGSGAPGGVFTPTLFIGLAIGMLYGRSLGLWFPDGEEITLLLGLTGMATLLAATTHAPIMSTLMICEMTGEYQLLPGLLIACVIASVISRTLHRDSIYRQHTAKHS.

The next 10 helical transmembrane spans lie at 5-25 (LLIA…FRHA), 54-74 (LLTP…WQKF), 146-166 (LWIA…PLAG), 168-188 (LFIA…PVII), 222-242 (ALII…LTLM), 258-278 (WQLA…PAVW), 291-311 (APPL…AVLA), 316-336 (GAPG…GMLY), 352-372 (LLLG…APIM), and 380-400 (MTGE…ASVI).

The protein belongs to the chloride channel (TC 2.A.49) family. ClcB subfamily.

It is found in the cell inner membrane. In terms of biological role, probably acts as an electrical shunt for an outwardly-directed proton pump that is linked to amino acid decarboxylation, as part of the extreme acid resistance (XAR) response. This is Voltage-gated ClC-type chloride channel ClcB from Escherichia coli O17:K52:H18 (strain UMN026 / ExPEC).